The sequence spans 222 residues: Large ribosomal subunit protein uL1 (222 aa).

It belongs to the universal ribosomal protein uL1 family. As to quaternary structure, part of the 50S ribosomal subunit.

Functionally, binds directly to 23S rRNA. Probably involved in E site tRNA release. Its function is as follows. Protein L1 is also a translational repressor protein, it controls the translation of its operon by binding to its mRNA. This is Large ribosomal subunit protein uL1 from Pyrobaculum arsenaticum (strain DSM 13514 / JCM 11321 / PZ6).